The following is a 54-amino-acid chain: Potassium channel toxin alpha-KTx 14.1 (54 aa).

Residues 1 to 23 (MKIFFAILLILAVCSMAIWTVNG) form the signal peptide.

The protein belongs to the short scorpion toxin superfamily. Potassium channel inhibitor family. Alpha-KTx 14 subfamily. Post-translationally, probably has three disulfide bridges. As to expression, expressed by the venom gland.

The protein resides in the secreted. Functionally, potential blocker of potassium channels. This chain is Potassium channel toxin alpha-KTx 14.1, found in Olivierus martensii (Manchurian scorpion).